The primary structure comprises 114 residues: Nucleoid-associated protein PCC7424_2224 (114 aa).

Belongs to the YbaB/EbfC family. As to quaternary structure, homodimer.

It localises to the cytoplasm. The protein localises to the nucleoid. Its function is as follows. Binds to DNA and alters its conformation. May be involved in regulation of gene expression, nucleoid organization and DNA protection. In Gloeothece citriformis (strain PCC 7424) (Cyanothece sp. (strain PCC 7424)), this protein is Nucleoid-associated protein PCC7424_2224.